The chain runs to 96 residues: Aspartyl/glutamyl-tRNA(Asn/Gln) amidotransferase subunit C (96 aa).

This sequence belongs to the GatC family. As to quaternary structure, heterotrimer of A, B and C subunits.

It catalyses the reaction L-glutamyl-tRNA(Gln) + L-glutamine + ATP + H2O = L-glutaminyl-tRNA(Gln) + L-glutamate + ADP + phosphate + H(+). The catalysed reaction is L-aspartyl-tRNA(Asn) + L-glutamine + ATP + H2O = L-asparaginyl-tRNA(Asn) + L-glutamate + ADP + phosphate + 2 H(+). Allows the formation of correctly charged Asn-tRNA(Asn) or Gln-tRNA(Gln) through the transamidation of misacylated Asp-tRNA(Asn) or Glu-tRNA(Gln) in organisms which lack either or both of asparaginyl-tRNA or glutaminyl-tRNA synthetases. The reaction takes place in the presence of glutamine and ATP through an activated phospho-Asp-tRNA(Asn) or phospho-Glu-tRNA(Gln). This is Aspartyl/glutamyl-tRNA(Asn/Gln) amidotransferase subunit C from Deinococcus deserti (strain DSM 17065 / CIP 109153 / LMG 22923 / VCD115).